A 164-amino-acid polypeptide reads, in one-letter code: Protein-export protein SecB (164 aa).

Belongs to the SecB family. Homotetramer, a dimer of dimers. One homotetramer interacts with 1 SecA dimer.

The protein resides in the cytoplasm. In terms of biological role, one of the proteins required for the normal export of preproteins out of the cell cytoplasm. It is a molecular chaperone that binds to a subset of precursor proteins, maintaining them in a translocation-competent state. It also specifically binds to its receptor SecA. The chain is Protein-export protein SecB from Herminiimonas arsenicoxydans.